We begin with the raw amino-acid sequence, 262 residues long: Light-harvesting complex-like protein 3 isotype 1, chloroplastic (262 aa).

A chloroplast-targeting transit peptide spans 1-39 (MALFSPPISSSSLQNPNFIPKFSFSLLSSNRFSLLSVTR). 2 helical membrane-spanning segments follow: residues 180-200 (AAMIGFFMAYFVDSLTGVGLV) and 202-222 (QMGNFFCKTLLFVAVAGVLFI).

As to quaternary structure, interacts with GGR. Forms homodimer, and heterodimer with LIL3.2. Expressed in photosynthetically active tissues (at protein level).

Its subcellular location is the plastid. It is found in the chloroplast thylakoid membrane. In terms of biological role, light-harvesting-like protein required for biosynthesis of phytylated chlorophylls and alpha-tocopherol in green seedlings. Functions by anchoring geranylgeranyl reductase (GGR) in the thylakoid membrane, leading to the stabilization of GGR activity. Binds chlorophyll a in the thylakoid membrane. Plays a role in the regulation of chlorophyll biosynthesis under light stress and under standard growth conditions. The protein is Light-harvesting complex-like protein 3 isotype 1, chloroplastic (LIL3.1) of Arabidopsis thaliana (Mouse-ear cress).